The following is a 268-amino-acid chain: NAC transcription factor 29 (268 aa).

The NAC domain occupies 9 to 161 (LPPGFRFHPT…EWVLCRIYKK (153 aa)). The DNA-binding element occupies 106-167 (VGVKKALVFY…IYKKRGASKL (62 aa)).

In terms of tissue distribution, expressed in senescing leaves, petals and sepals.

Its subcellular location is the nucleus. Functionally, transcription activator that binds to, and transactivates the promoter of the abscisic aldehyde oxidase AAO3. Promotes chlorophyll degradation in leaves by enhancing transcription of AAO3, which leads to increased levels of the senescence-inducing hormone abscisic acid (ABA). Involved in the control of dehydration in senescing leaves. Binds to the DNA sequence 5'-CACGTAAGT-3' of SAG113 promoter. SAG113 acts as a negative regulator of ABA signaling for stomatal closure in leaves, and controls water loss during leaf senescence. Transcription factor of the NAC family involved in senescence. May function in the transition between active cell division and cell expansion. Required for normal seed development and morphology. In Arabidopsis thaliana (Mouse-ear cress), this protein is NAC transcription factor 29 (NAC029).